Consider the following 475-residue polypeptide: FAD-dependent monooxygenase spyC (475 aa).

An N-terminal signal peptide occupies residues 1–24 (MTAKPPFKVIIVGGSIAGLTLAHC). FAD contacts are provided by Glu-36, Gly-50, Arg-109, Asp-310, and Ala-323. The helical transmembrane segment at 444–464 (LLIPFLYPVVAFSLCVLAWIG) threads the bilayer.

It belongs to the paxM FAD-dependent monooxygenase family. It depends on FAD as a cofactor.

The protein localises to the membrane. The enzyme catalyses (2E,6E,10E)-geranylgeranyl-triacetate lactone + AH2 + O2 = (S)-(2E,6E,10E)-epoxygeranylgeranyl-triacetate lactone + A + H2O. The protein operates within secondary metabolite biosynthesis; terpenoid biosynthesis. Functionally, FAD-dependent monooxygenase spyC; part of the gene cluster that mediates the biosynthesis of meroterpenoids called sartorypyrones. Within the pathway, spyC catalyzes the epoxidation of geranylgeranyl-triacetate lactone at the terminal olein to yield epoxygeranylgeranyl-triacetate lactone. The biosynthesis of sartorypyrones begins with the production of triacetic acid lactone (TAL) by the NR-PKS spyA using one molecule of acetyl-CoA and two molecules of malonyl-CoA. The prenyltransferase spyF then conjugates geranylgeranyl pyrophosphate (GGPP) to TAL to form geranylgeranyl-triacetate lactone, for which the pathway-specific geranylgeranyl pyrophosphate synthase (GGPS) spyE is required to provide GGPP. Subsequently, geranylgeranyl-triacetate lactone is epoxidized at the terminal olein by the FAD-dependent monooxygenase spyC, followed by cyclization of the terpenoid component catalyzed by the terpene cyclase spyD to produce both the bicyclic sartorypyrone F and the monocyclic sartorypyrone D. Finally, the last step of the biosynthesis involves the acetylation of the meroterpenoids sartorypyrones D and F by the acetyltransferase SpyB to produce sartorypyrones A and G, respectively. In Aspergillus fumigatus (strain ATCC MYA-4609 / CBS 101355 / FGSC A1100 / Af293) (Neosartorya fumigata), this protein is FAD-dependent monooxygenase spyC.